Consider the following 160-residue polypeptide: Protein-export protein SecB (160 aa).

This sequence belongs to the SecB family. As to quaternary structure, homotetramer, a dimer of dimers. One homotetramer interacts with 1 SecA dimer.

The protein localises to the cytoplasm. Functionally, one of the proteins required for the normal export of preproteins out of the cell cytoplasm. It is a molecular chaperone that binds to a subset of precursor proteins, maintaining them in a translocation-competent state. It also specifically binds to its receptor SecA. This chain is Protein-export protein SecB, found in Beijerinckia indica subsp. indica (strain ATCC 9039 / DSM 1715 / NCIMB 8712).